Here is a 128-residue protein sequence, read N- to C-terminus: Saitohin (128 aa).

Polar residues predominate over residues 77 to 87; that stretch reads SYSSEENSRNG. The segment at 77–128 is disordered; it reads SYSSEENSRNGAEQGRQLSIEGPFQGQNCPSHPAAALPLPMRGESQATSCQV.

Interacts with PRDX6.

It localises to the cytoplasm. The protein resides in the nucleus. This chain is Saitohin (STH), found in Pan troglodytes (Chimpanzee).